The primary structure comprises 212 residues: MANSGVQLLGFGLSLIGIIGLIVGTILPQWKMSAYVGDSIITAVATYQGLWMSCAFQSTGQLQCKIYDSILQLDSDLQATRALMIVGIIVSIAGLGVASIGMKCTTCGADDKVRKTRTAMTGGIILLVGALCAVVACSWFAHNVIRAFYNPFTPVNTKFEFGAAIFIAWGGSFLDVLGGAMLAASCPRSKQVSKYPKSNSTRSANGSNKEYV.

Over 1–7 (MANSGVQ) the chain is Cytoplasmic. Residues 8–28 (LLGFGLSLIGIIGLIVGTILP) form a helical membrane-spanning segment. Over 29-81 (QWKMSAYVGDSIITAVATYQGLWMSCAFQSTGQLQCKIYDSILQLDSDLQATR) the chain is Extracellular. A helical transmembrane segment spans residues 82–102 (ALMIVGIIVSIAGLGVASIGM). The Cytoplasmic portion of the chain corresponds to 103 to 119 (KCTTCGADDKVRKTRTA). A helical transmembrane segment spans residues 120 to 140 (MTGGIILLVGALCAVVACSWF). Topologically, residues 141-162 (AHNVIRAFYNPFTPVNTKFEFG) are extracellular. The helical transmembrane segment at 163 to 183 (AAIFIAWGGSFLDVLGGAMLA) threads the bilayer. The Cytoplasmic portion of the chain corresponds to 184–212 (ASCPRSKQVSKYPKSNSTRSANGSNKEYV). Residues 191 to 212 (QVSKYPKSNSTRSANGSNKEYV) form a disordered region.

Belongs to the claudin family.

It localises to the cell junction. It is found in the tight junction. Its subcellular location is the cell membrane. Plays a major role in tight junction-specific obliteration of the intercellular space. This chain is Claudin-7-A, found in Danio rerio (Zebrafish).